Reading from the N-terminus, the 212-residue chain is MYYLFKDLFFPPVSEADEEGVLAIGGDLDPERLKLAYKSGIFPWFNEGEPILWWAPDPRMVLFFDELVISKSMRKILNKKIFKVTYNKNFKEVISNCQQIKREGQNGTWISNEMIEAYCELHKQGIAKSVEVWQDEVLVGGLYGIDLGHVFCGESMFSKVSNASKTAFIALALYLKKENYKLLDCQVYNSHLESLGCREIDREEFMSILKSK.

It belongs to the L/F-transferase family.

The protein localises to the cytoplasm. It catalyses the reaction N-terminal L-lysyl-[protein] + L-leucyl-tRNA(Leu) = N-terminal L-leucyl-L-lysyl-[protein] + tRNA(Leu) + H(+). The enzyme catalyses N-terminal L-arginyl-[protein] + L-leucyl-tRNA(Leu) = N-terminal L-leucyl-L-arginyl-[protein] + tRNA(Leu) + H(+). The catalysed reaction is L-phenylalanyl-tRNA(Phe) + an N-terminal L-alpha-aminoacyl-[protein] = an N-terminal L-phenylalanyl-L-alpha-aminoacyl-[protein] + tRNA(Phe). Functionally, functions in the N-end rule pathway of protein degradation where it conjugates Leu, Phe and, less efficiently, Met from aminoacyl-tRNAs to the N-termini of proteins containing an N-terminal arginine or lysine. The chain is Leucyl/phenylalanyl-tRNA--protein transferase from Flavobacterium johnsoniae (strain ATCC 17061 / DSM 2064 / JCM 8514 / BCRC 14874 / CCUG 350202 / NBRC 14942 / NCIMB 11054 / UW101) (Cytophaga johnsonae).